The following is a 305-amino-acid chain: Aspartate carbamoyltransferase catalytic subunit (305 aa).

Arg51 and Thr52 together coordinate carbamoyl phosphate. Position 79 (Lys79) interacts with L-aspartate. Residues Arg101, His130, and Gln133 each coordinate carbamoyl phosphate. Residues Arg163 and Arg215 each coordinate L-aspartate. Carbamoyl phosphate is bound by residues Gly256 and Pro257.

This sequence belongs to the aspartate/ornithine carbamoyltransferase superfamily. ATCase family. In terms of assembly, heterododecamer (2C3:3R2) of six catalytic PyrB chains organized as two trimers (C3), and six regulatory PyrI chains organized as three dimers (R2).

It carries out the reaction carbamoyl phosphate + L-aspartate = N-carbamoyl-L-aspartate + phosphate + H(+). The protein operates within pyrimidine metabolism; UMP biosynthesis via de novo pathway; (S)-dihydroorotate from bicarbonate: step 2/3. Its function is as follows. Catalyzes the condensation of carbamoyl phosphate and aspartate to form carbamoyl aspartate and inorganic phosphate, the committed step in the de novo pyrimidine nucleotide biosynthesis pathway. This is Aspartate carbamoyltransferase catalytic subunit from Ehrlichia canis (strain Jake).